The sequence spans 82 residues: Polyferredoxin protein FwdG (82 aa).

4Fe-4S ferredoxin-type domains follow at residues 4 to 33 and 51 to 80; these read YELVVYPERCHGCGNCVVSCPVNAKHPETW and VVTVVNQDLCGGCGACIEACPVNAIELVFK. [4Fe-4S] cluster is bound by residues cysteine 13, cysteine 16, cysteine 19, cysteine 23, cysteine 60, cysteine 63, cysteine 66, and cysteine 70.

It depends on [4Fe-4S] cluster as a cofactor.

This Methanocaldococcus jannaschii (strain ATCC 43067 / DSM 2661 / JAL-1 / JCM 10045 / NBRC 100440) (Methanococcus jannaschii) protein is Polyferredoxin protein FwdG (fwdG).